A 363-amino-acid chain; its full sequence is Fructose-1,6-bisphosphate aldolase/phosphatase (363 aa).

Asp-11 functions as the Proton acceptor; for FBP phosphatase activity in the catalytic mechanism. Mg(2+) contacts are provided by Asp-11, His-18, Asp-51, and Asp-52. His-18 contributes to the beta-D-fructose 1,6-bisphosphate binding site. His-18 is a dihydroxyacetone phosphate binding site. Tyr-89 contributes to the beta-D-fructose 1,6-bisphosphate binding site. Gln-93 lines the Mg(2+) pocket. Beta-D-fructose 1,6-bisphosphate is bound at residue 102 to 103 (GN). Asp-130 serves as a coordination point for Mg(2+). Lys-131 is a beta-D-fructose 1,6-bisphosphate binding site. Lys-131 contacts dihydroxyacetone phosphate. The active-site Proton donor/acceptor; for FBP aldolase activity is the Tyr-230. Mg(2+) is bound by residues Lys-233, Asp-234, and Asp-235. The active-site Schiff-base intermediate with DHAP; for FBP aldolase activity is the Lys-233. Beta-D-fructose 1,6-bisphosphate-binding positions include 243 to 244 (QK), Arg-267, and Tyr-348. Arg-267 is a dihydroxyacetone phosphate binding site.

The protein belongs to the FBP aldolase/phosphatase family. In terms of assembly, homooctamer; dimer of tetramers. Mg(2+) is required as a cofactor.

It catalyses the reaction beta-D-fructose 1,6-bisphosphate + H2O = beta-D-fructose 6-phosphate + phosphate. It carries out the reaction beta-D-fructose 1,6-bisphosphate = D-glyceraldehyde 3-phosphate + dihydroxyacetone phosphate. Its pathway is carbohydrate biosynthesis; gluconeogenesis. Functionally, catalyzes two subsequent steps in gluconeogenesis: the aldol condensation of dihydroxyacetone phosphate (DHAP) and glyceraldehyde-3-phosphate (GA3P) to fructose-1,6-bisphosphate (FBP), and the dephosphorylation of FBP to fructose-6-phosphate (F6P). This Thermus thermophilus (strain ATCC BAA-163 / DSM 7039 / HB27) protein is Fructose-1,6-bisphosphate aldolase/phosphatase.